Consider the following 152-residue polypeptide: Nucleoside diphosphate kinase B (152 aa).

The interval 1–66 is interaction with AKAP13; sequence MANLERTFIA…DRPFFPGLVK (66 aa). Positions 12, 60, 88, 94, 105, and 115 each coordinate ATP. His-118 acts as the Pros-phosphohistidine intermediate in catalysis.

It belongs to the NDK family. In terms of assembly, hexamer of two different chains: An and B (A6, A5B, A4B2, A3B3, A2B4, AB5, B6). Interacts with CAPN8. Interacts with AKAP13. Interacts with ITGB1BP1 (via C-terminal domain region). Interacts with BCL2L10. Mg(2+) is required as a cofactor. Expressed in the base region of the oxyntic and pyloric mucosae.

It is found in the cytoplasm. The protein resides in the cell projection. The protein localises to the lamellipodium. It localises to the ruffle. Its subcellular location is the nucleus. The enzyme catalyses a 2'-deoxyribonucleoside 5'-diphosphate + ATP = a 2'-deoxyribonucleoside 5'-triphosphate + ADP. The catalysed reaction is a ribonucleoside 5'-diphosphate + ATP = a ribonucleoside 5'-triphosphate + ADP. It catalyses the reaction ATP + protein L-histidine = ADP + protein N-phospho-L-histidine.. Major role in the synthesis of nucleoside triphosphates other than ATP. The ATP gamma phosphate is transferred to the NDP beta phosphate via a ping-pong mechanism, using a phosphorylated active-site intermediate. Negatively regulates Rho activity by interacting with AKAP13/LBC. Acts as a transcriptional activator of the MYC gene; binds DNA non-specifically. Binds to both single-stranded guanine- and cytosine-rich strands within the nuclease hypersensitive element (NHE) III(1) region of the MYC gene promoter. Does not bind to duplex NHE III(1). Has G-quadruplex (G4) DNA-binding activity, which is independent of its nucleotide-binding and kinase activity. Binds both folded and unfolded G4 with similar low nanomolar affinities. Stabilizes folded G4s regardless of whether they are prefolded or not. Exhibits histidine protein kinase activity. This Mus musculus (Mouse) protein is Nucleoside diphosphate kinase B (Nme2).